Reading from the N-terminus, the 485-residue chain is Glutamyl-tRNA(Gln) amidotransferase subunit A (485 aa).

Residues Lys-78 and Ser-153 each act as charge relay system in the active site. Residue Ser-177 is the Acyl-ester intermediate of the active site.

The protein belongs to the amidase family. GatA subfamily. Heterotrimer of A, B and C subunits.

The enzyme catalyses L-glutamyl-tRNA(Gln) + L-glutamine + ATP + H2O = L-glutaminyl-tRNA(Gln) + L-glutamate + ADP + phosphate + H(+). Allows the formation of correctly charged Gln-tRNA(Gln) through the transamidation of misacylated Glu-tRNA(Gln) in organisms which lack glutaminyl-tRNA synthetase. The reaction takes place in the presence of glutamine and ATP through an activated gamma-phospho-Glu-tRNA(Gln). This chain is Glutamyl-tRNA(Gln) amidotransferase subunit A, found in Geobacter metallireducens (strain ATCC 53774 / DSM 7210 / GS-15).